Consider the following 207-residue polypeptide: NADH-quinone oxidoreductase subunit C (207 aa).

The protein belongs to the complex I 30 kDa subunit family. In terms of assembly, NDH-1 is composed of 14 different subunits. Subunits NuoB, C, D, E, F, and G constitute the peripheral sector of the complex.

The protein localises to the cell inner membrane. The enzyme catalyses a quinone + NADH + 5 H(+)(in) = a quinol + NAD(+) + 4 H(+)(out). Functionally, NDH-1 shuttles electrons from NADH, via FMN and iron-sulfur (Fe-S) centers, to quinones in the respiratory chain. The immediate electron acceptor for the enzyme in this species is believed to be ubiquinone. Couples the redox reaction to proton translocation (for every two electrons transferred, four hydrogen ions are translocated across the cytoplasmic membrane), and thus conserves the redox energy in a proton gradient. This chain is NADH-quinone oxidoreductase subunit C, found in Thermus thermophilus (strain ATCC BAA-163 / DSM 7039 / HB27).